The chain runs to 1275 residues: Mediator of RNA polymerase II transcription subunit 33B (1275 aa).

The span at 772–791 (GSQSLTPSSGSSSLSTSGGD) shows a compositional bias: low complexity. The segment at 772–792 (GSQSLTPSSGSSSLSTSGGDD) is disordered.

It belongs to the Mediator complex subunit 33 family. In terms of assembly, component of the Mediator complex. Ubiquitous.

It localises to the nucleus. Its function is as follows. Component of the Mediator complex, a coactivator involved in the regulated transcription of nearly all RNA polymerase II-dependent genes. Mediator functions as a bridge to convey information from gene-specific regulatory proteins to the basal RNA polymerase II transcription machinery. The Mediator complex, having a compact conformation in its free form, is recruited to promoters by direct interactions with regulatory proteins and serves for the assembly of a functional preinitiation complex with RNA polymerase II and the general transcription factors. Involved in the repression of phenylpropanoid biosynthesis. May compete with MED33B for common binding partners or for occupancy in Mediator. The chain is Mediator of RNA polymerase II transcription subunit 33B (MED33B) from Arabidopsis thaliana (Mouse-ear cress).